A 620-amino-acid polypeptide reads, in one-letter code: Cryptochrome-1 (620 aa).

In terms of domain architecture, Photolyase/cryptochrome alpha/beta spans 3 to 132; the sequence is VNAVHWFRKG…EVIVRISHTL (130 aa). Short sequence motifs (LIR) lie at residues 50-54, 82-87, and 151-156; these read NRWRF, DVFPRL, and KRFQTL. FAD is bound at residue S252. 4 short sequence motifs (LIR) span residues 255–260, 271–276, 285–290, and 335–339; these read LRFGCL, DLYKKV, SLYGQL, and TGFPW. Q289 is a binding site for FAD. Position 355 (H355) interacts with FAD. An LIR 8 motif is present at residues 379–384; the sequence is KVFEEL. FAD is bound at residue 387–389; the sequence is DAD. 5 short sequence motifs (LIR) span residues 395-400, 411-416, 430-435, 486-491, and 492-497; these read GSWMWL, HCYCPV, RRYLPV, QIYQQL, and SRYRGL. The segment at 592 to 620 is disordered; that stretch reads GTGISAGKRPNPEEETQSVGPKVQRQSTN.

This sequence belongs to the DNA photolyase class-1 family. As to quaternary structure, component of the circadian core oscillator, which includes the CRY proteins, CLOCK or NPAS2, BMAL1 or BMAL2, CSNK1E, and the PER proteins. FAD serves as cofactor. It depends on (6R)-5,10-methylene-5,6,7,8-tetrahydrofolate as a cofactor. In terms of tissue distribution, expressed in the retina. High levels found in ganglion cells of the retina.

Its subcellular location is the cytoplasm. The protein localises to the nucleus. Its function is as follows. Transcriptional repressor which forms a core component of the circadian clock. The circadian clock, an internal time-keeping system, regulates various physiological processes through the generation of approximately 24 hour circadian rhythms in gene expression, which are translated into rhythms in metabolism and behavior. It is derived from the Latin roots 'circa' (about) and 'diem' (day) and acts as an important regulator of a wide array of physiological functions including metabolism, sleep, body temperature, blood pressure, endocrine, immune, cardiovascular, and renal function. Consists of two major components: the central clock, residing in the suprachiasmatic nucleus (SCN) of the brain, and the peripheral clocks that are present in nearly every tissue and organ system. Both the central and peripheral clocks can be reset by environmental cues, also known as Zeitgebers (German for 'timegivers'). The predominant Zeitgeber for the central clock is light, which is sensed by retina and signals directly to the SCN. The central clock entrains the peripheral clocks through neuronal and hormonal signals, body temperature and feeding-related cues, aligning all clocks with the external light/dark cycle. Circadian rhythms allow an organism to achieve temporal homeostasis with its environment at the molecular level by regulating gene expression to create a peak of protein expression once every 24 hours to control when a particular physiological process is most active with respect to the solar day. Transcription and translation of core clock components (CLOCK, NPAS2, BMAL1, BMAL2, PER1, PER2, PER3, CRY1 and CRY2) plays a critical role in rhythm generation, whereas delays imposed by post-translational modifications (PTMs) are important for determining the period (tau) of the rhythms (tau refers to the period of a rhythm and is the length, in time, of one complete cycle). A diurnal rhythm is synchronized with the day/night cycle, while the ultradian and infradian rhythms have a period shorter and longer than 24 hours, respectively. Disruptions in the circadian rhythms contribute to the pathology of cardiovascular diseases, cancer, metabolic syndromes and aging. A transcription/translation feedback loop (TTFL) forms the core of the molecular circadian clock mechanism. Transcription factors, CLOCK or NPAS2 and BMAL1 or BMAL2, form the positive limb of the feedback loop, act in the form of a heterodimer and activate the transcription of core clock genes and clock-controlled genes (involved in key metabolic processes), harboring E-box elements (5'-CACGTG-3') within their promoters. The core clock genes: PER1/2/3 and CRY1/2 which are transcriptional repressors form the negative limb of the feedback loop and interact with the CLOCK|NPAS2-BMAL1|BMAL2 heterodimer inhibiting its activity and thereby negatively regulating their own expression. This heterodimer also activates nuclear receptors NR1D1, NR1D2, RORA, RORB and RORG, which form a second feedback loop and which activate and repress BMAL1 transcription, respectively. CRY1 and CRY2 have redundant functions but also differential and selective contributions at least in defining the pace of the SCN circadian clock and its circadian transcriptional outputs. More potent transcriptional repressor in cerebellum and liver than CRY2, though more effective in lengthening the period of the SCN oscillator. On its side, CRY2 seems to play a critical role in tuning SCN circadian period by opposing the action of CRY1. With CRY2, is dispensable for circadian rhythm generation but necessary for the development of intercellular networks for rhythm synchrony. Capable of translocating circadian clock core proteins such as PER proteins to the nucleus. Interacts with CLOCK:BMAL1 independently of PER proteins and is found at CLOCK:BMAL1-bound sites, suggesting that CRY may act as a molecular gatekeeper to maintain CLOCK:BMAL1 in a poised and repressed state until the proper time for transcriptional activation. The protein is Cryptochrome-1 (CRY1) of Sylvia borin (Garden warbler).